A 1324-amino-acid chain; its full sequence is Coiled-coil domain-containing protein 171 (1324 aa).

5 coiled-coil regions span residues 29–296 (KNET…RAAH), 325–393 (AEAV…RLQY), 453–521 (FSVV…KCAD), 599–712 (SELC…VREN), and 981–1145 (FTQR…KECV). The span at 1301-1312 (PHSLSSQSSPGV) shows a compositional bias: polar residues. The interval 1301–1324 (PHSLSSQSSPGVPTNAKRPSQIGL) is disordered.

This Mus musculus (Mouse) protein is Coiled-coil domain-containing protein 171 (Ccdc171).